The sequence spans 121 residues: Cytochrome c2 iso-2 (121 aa).

Positions 15, 18, 19, and 98 each coordinate heme c.

It belongs to the cytochrome c family. In terms of processing, binds 1 heme c group covalently per subunit.

Functionally, cytochrome c2 is found mainly in purple, non-sulfur, photosynthetic bacteria where it functions as the electron donor to the oxidized bacteriochlorophyll in the photophosphorylation pathway. However, it may also have a role in the respiratory chain and is found in some non-photosynthetic bacteria. This Rhodospirillum centenum (Rhodocista centenaria) protein is Cytochrome c2 iso-2.